Reading from the N-terminus, the 386-residue chain is Alcohol dehydrogenase-like 2 (386 aa).

Cysteine 51, threonine 53, histidine 74, cysteine 104, cysteine 107, cysteine 110, cysteine 118, and cysteine 183 together coordinate Zn(2+). Residues threonine 53 and histidine 74 each contribute to the an alcohol site. Threonine 53 provides a ligand contact to NAD(+). Residues 208–213, aspartate 232, lysine 237, 302–304, phenylalanine 329, and arginine 379 contribute to the NAD(+) site; these read GLGAVG and LGM.

It belongs to the zinc-containing alcohol dehydrogenase family. Class-III subfamily. In terms of assembly, homodimer. The cofactor is Zn(2+).

The protein resides in the cytoplasm. The catalysed reaction is a primary alcohol + NAD(+) = an aldehyde + NADH + H(+). It carries out the reaction a secondary alcohol + NAD(+) = a ketone + NADH + H(+). This is Alcohol dehydrogenase-like 2 from Arabidopsis thaliana (Mouse-ear cress).